A 474-amino-acid polypeptide reads, in one-letter code: MAQETLVDTSIQGKIVQCIGAVVDVEFARNQMPKIYDALKMEGSSLTLEVQQQLGDGIVRTIALGTSDGLRRGNIVYNTGANITVPVGKATLGRIMDVLGAPIDERGPVDQTLTAPIHRKAPAYDELSPSQELLETGIKVIDLVCPFAKGGKVGLFGGAGVGKTVNMMELINNIAKAHSGLSVFAGVGERTREGNDFYHEMADSGVVNLDKLEDSKVAMVYGQMNEPPGNRLRVALTGLTIAESFRDEGRDVLFFVDNIYRYTLAGTEVSALLGRMPSAVGYQPTLAEEMGRLQERITSTKVGSITSIQAVYVPADDLTDPSPATTFAHLDSTVVLSRDIASLGIYPAVDPLDSTSRQLSPAVVGEDHYNTARAVQGTLQRYKELRDIIAILGMDELAPEDKLAVARARKIQRFLSQPFHVAEVFTGSPGKYVSLAETIRGFKMIVAGECDHLPEQAFYMVGTIDEAFEKAKKM.

157–164 (GGAGVGKT) contacts ATP.

The protein belongs to the ATPase alpha/beta chains family. As to quaternary structure, F-type ATPases have 2 components, CF(1) - the catalytic core - and CF(0) - the membrane proton channel. CF(1) has five subunits: alpha(3), beta(3), gamma(1), delta(1), epsilon(1). CF(0) has three main subunits: a(1), b(2) and c(9-12). The alpha and beta chains form an alternating ring which encloses part of the gamma chain. CF(1) is attached to CF(0) by a central stalk formed by the gamma and epsilon chains, while a peripheral stalk is formed by the delta and b chains.

The protein resides in the cell inner membrane. It carries out the reaction ATP + H2O + 4 H(+)(in) = ADP + phosphate + 5 H(+)(out). Produces ATP from ADP in the presence of a proton gradient across the membrane. The catalytic sites are hosted primarily by the beta subunits. The protein is ATP synthase subunit beta 1 of Polaromonas naphthalenivorans (strain CJ2).